Consider the following 259-residue polypeptide: Deoxyribose-phosphate aldolase (259 aa).

Aspartate 102 (proton donor/acceptor) is an active-site residue. Lysine 167 (schiff-base intermediate with acetaldehyde) is an active-site residue. The active-site Proton donor/acceptor is the lysine 201.

This sequence belongs to the DeoC/FbaB aldolase family. DeoC type 2 subfamily.

It is found in the cytoplasm. The enzyme catalyses 2-deoxy-D-ribose 5-phosphate = D-glyceraldehyde 3-phosphate + acetaldehyde. It participates in carbohydrate degradation; 2-deoxy-D-ribose 1-phosphate degradation; D-glyceraldehyde 3-phosphate and acetaldehyde from 2-deoxy-alpha-D-ribose 1-phosphate: step 2/2. Catalyzes a reversible aldol reaction between acetaldehyde and D-glyceraldehyde 3-phosphate to generate 2-deoxy-D-ribose 5-phosphate. This chain is Deoxyribose-phosphate aldolase, found in Shigella boydii serotype 4 (strain Sb227).